Here is a 347-residue protein sequence, read N- to C-terminus: Heat-inducible transcription repressor HrcA (347 aa).

Belongs to the HrcA family.

Negative regulator of class I heat shock genes (grpE-dnaK-dnaJ and groELS operons). Prevents heat-shock induction of these operons. This chain is Heat-inducible transcription repressor HrcA, found in Lactococcus lactis subsp. cremoris (strain MG1363).